The primary structure comprises 613 residues: Dihydroxy-acid dehydratase (613 aa).

Aspartate 81 provides a ligand contact to Mg(2+). Position 122 (cysteine 122) interacts with [2Fe-2S] cluster. Mg(2+) is bound by residues aspartate 123 and lysine 124. Lysine 124 is modified (N6-carboxylysine). Cysteine 193 serves as a coordination point for [2Fe-2S] cluster. Glutamate 489 lines the Mg(2+) pocket. Serine 515 functions as the Proton acceptor in the catalytic mechanism.

It belongs to the IlvD/Edd family. In terms of assembly, homodimer. Requires [2Fe-2S] cluster as cofactor. Mg(2+) serves as cofactor.

The catalysed reaction is (2R)-2,3-dihydroxy-3-methylbutanoate = 3-methyl-2-oxobutanoate + H2O. It carries out the reaction (2R,3R)-2,3-dihydroxy-3-methylpentanoate = (S)-3-methyl-2-oxopentanoate + H2O. The protein operates within amino-acid biosynthesis; L-isoleucine biosynthesis; L-isoleucine from 2-oxobutanoate: step 3/4. It participates in amino-acid biosynthesis; L-valine biosynthesis; L-valine from pyruvate: step 3/4. Its function is as follows. Functions in the biosynthesis of branched-chain amino acids. Catalyzes the dehydration of (2R,3R)-2,3-dihydroxy-3-methylpentanoate (2,3-dihydroxy-3-methylvalerate) into 2-oxo-3-methylpentanoate (2-oxo-3-methylvalerate) and of (2R)-2,3-dihydroxy-3-methylbutanoate (2,3-dihydroxyisovalerate) into 2-oxo-3-methylbutanoate (2-oxoisovalerate), the penultimate precursor to L-isoleucine and L-valine, respectively. In Pseudomonas putida (strain GB-1), this protein is Dihydroxy-acid dehydratase.